A 449-amino-acid chain; its full sequence is C4-dicarboxylate transport protein 1 (449 aa).

Transmembrane regions (helical) follow at residues 16–38 (FLQV…DLAV), 53–71 (MLIA…SGAG), 84–106 (VIYF…YSLG), 157–176 (ILQV…LVGE), 197–219 (GMIV…ARYG), 229–251 (LVLV…VLRL), 311–333 (GFSI…PLAM), and 358–380 (LVIL…VLVL).

This sequence belongs to the dicarboxylate/amino acid:cation symporter (DAACS) (TC 2.A.23) family.

It localises to the cell inner membrane. Its function is as follows. Responsible for the transport of dicarboxylates such as succinate, fumarate, and malate from the periplasm across the membrane. This chain is C4-dicarboxylate transport protein 1 (dctA1), found in Pseudomonas aeruginosa (strain ATCC 15692 / DSM 22644 / CIP 104116 / JCM 14847 / LMG 12228 / 1C / PRS 101 / PAO1).